Reading from the N-terminus, the 122-residue chain is Large ribosomal subunit protein uL14 (122 aa).

Belongs to the universal ribosomal protein uL14 family. As to quaternary structure, part of the 50S ribosomal subunit. Forms a cluster with proteins L3 and L19. In the 70S ribosome, L14 and L19 interact and together make contacts with the 16S rRNA in bridges B5 and B8.

Its function is as follows. Binds to 23S rRNA. Forms part of two intersubunit bridges in the 70S ribosome. This Pseudomonas savastanoi pv. phaseolicola (strain 1448A / Race 6) (Pseudomonas syringae pv. phaseolicola (strain 1448A / Race 6)) protein is Large ribosomal subunit protein uL14.